We begin with the raw amino-acid sequence, 101 residues long: Trp operon repressor homolog (101 aa).

Residues 59–82 (QREIQQNLNTSAATITRGSNMIKT) mediate DNA binding.

This sequence belongs to the TrpR family. Homodimer.

It localises to the cytoplasm. This protein is an aporepressor. When complexed with L-tryptophan it binds the operator region of the trp operon and prevents the initiation of transcription. This chain is Trp operon repressor homolog, found in Haemophilus influenzae (strain 86-028NP).